A 306-amino-acid chain; its full sequence is Enoyl-CoA isomerase/hydratase MYCGRDRAFT_76805 (306 aa).

Residues 103 to 107 (AGADL) and G150 contribute to the substrate site.

Belongs to the enoyl-CoA hydratase/isomerase family.

It catalyses the reaction a (3S)-3-hydroxyacyl-CoA = a (2E)-enoyl-CoA + H2O. The catalysed reaction is a 4-saturated-(3S)-3-hydroxyacyl-CoA = a (3E)-enoyl-CoA + H2O. Its pathway is siderophore biosynthesis. In terms of biological role, enoyl-CoA isomerase/hydratase involved in the biosynthesis of a ferrichrome A-like siderophore which may contribute to organismal virulence. The first step of siderophore biosynthesis is performed by the HMG-CoA synthase (HMGS) MYCGRDRAFT_54740 which catalyzes the generation of HMG-CoA and CoA using acetoacetyl-CoA and acetyl-CoA as substrates. The enoyl-CoA isomerase/hydratase MYCGRDRAFT_76805 then catalyzes the conversion of HMG-CoA to methylglutaconyl-CoA. The acyltransferase MYCGRDRAFT_85486 then fuses methylglutaconyl-CoA with hydroxyornithine to yield methylglutaconyl hydroxyornithine. Methylglutaconyl hydroxyornithine is then available for use by the nonribosomal peptide synthetase NRPS2 to generate the ferrichrome A-like siderophore. This is Enoyl-CoA isomerase/hydratase MYCGRDRAFT_76805 from Zymoseptoria tritici (strain CBS 115943 / IPO323) (Speckled leaf blotch fungus).